A 503-amino-acid chain; its full sequence is Maturase K (503 aa).

Belongs to the intron maturase 2 family. MatK subfamily.

The protein localises to the plastid. It is found in the chloroplast. Its function is as follows. Usually encoded in the trnK tRNA gene intron. Probably assists in splicing its own and other chloroplast group II introns. The chain is Maturase K from Liquidambar orientalis (Oriental sweet gum).